We begin with the raw amino-acid sequence, 189 residues long: Large ribosomal subunit protein bL9 (189 aa).

Belongs to the bacterial ribosomal protein bL9 family.

Its function is as follows. Binds to the 23S rRNA. This is Large ribosomal subunit protein bL9 from Brucella melitensis biotype 2 (strain ATCC 23457).